The primary structure comprises 52 residues: Lantibiotic epidermin (52 aa).

The propeptide occupies 1–30 (MEAVKEKNDLFNLDVKVNAKESNDSGAEPR). Residues 33–37 (SKFIC) constitute a cross-link (lanthionine (Ser-Cys)). A cross-link (beta-methyllanthionine (Thr-Cys)) is located at residues 38–41 (TPGC). A (Z)-2,3-didehydrobutyrine modification is found at T44. Residues 46-51 (SFNSYC) constitute a cross-link (lanthionine (Ser-Cys)). The segment at residues 49-52 (SYCC) is a cross-link (S-(2-aminovinyl)-D-cysteine (Ser-Cys)).

Belongs to the type A lantibiotic family. Post-translationally, maturation of lantibiotics involves the enzymatic conversion of Thr, and Ser into dehydrated AA and the formation of thioether bonds with cysteine. The C-terminal lanthionine undergoes decarboxylation. This is followed by membrane translocation and cleavage of the modified precursor. In terms of processing, the 2,3-didehydrobutyrine is determined to be the Z-isomer.

Lanthionine-containing peptide antibiotic (lantibiotic) active on Gram-positive bacteria. The bactericidal activity of lantibiotics is based on depolarization of energized bacterial cytoplasmic membranes, initiated by the formation of aqueous transmembrane pores. This Staphylococcus epidermidis protein is Lantibiotic epidermin (epiA).